The following is a 916-amino-acid chain: DNA ligase 1 (916 aa).

The span at 1–10 (MQRSIMSFFQ) shows a compositional bias: polar residues. Residues 1 to 197 (MQRSIMSFFQ…SPESVTLTKT (197 aa)) form a disordered region. A compositionally biased stretch (basic and acidic residues) spans 13-43 (KEGKAKKPEKETPSSIREKEPPPKVALKERN). Phosphoserine occurs at positions 49, 51, and 65. Thr-77 carries the phosphothreonine modification. The span at 99–111 (PENSPVFNCSSPM) shows a compositional bias: polar residues. The span at 119-129 (PKRRTARKQLP) shows a compositional bias: basic residues. Lys-144 carries the post-translational modification N6-acetyllysine. A compositionally biased stretch (basic and acidic residues) spans 153-177 (KEEETPKESLAEAEDIKQKEEKEGD). Positions 185–197 (PTKSPESVTLTKT) are enriched in polar residues. At Thr-193 the chain carries Phosphothreonine. N6-acetyllysine is present on Lys-225. 2 positions are modified to phosphoserine: Ser-228 and Ser-229. Thr-232 is modified (phosphothreonine). A disordered region spans residues 236 to 266 (PAVKTEVKQEESGTLRKEETKGTLDPANYNP). The segment covering 238-257 (VKTEVKQEESGTLRKEETKG) has biased composition (basic and acidic residues). The tract at residues 447 to 456 (RLRLGLAEQS) is interaction with target DNA. ATP is bound at residue Glu-564. The active-site N6-AMP-lysine intermediate is Lys-566. Residues Arg-571 and Glu-619 each coordinate ATP. Glu-619 contributes to the Mg(2+) binding site. Residues 640-642 (KRK) are interaction with target DNA. Glu-718 is a Mg(2+) binding site. The ATP site is built by Lys-723 and Lys-742. Residue Thr-796 is modified to Phosphothreonine. 4 positions are modified to phosphoserine: Ser-799, Ser-906, Ser-907, and Ser-911. Positions 879–916 (DKQPEQATTSNQVASLYRKQSQIQNQQSSDLDSDVEDY) are disordered. Over residues 883 to 908 (EQATTSNQVASLYRKQSQIQNQQSSD) the composition is skewed to polar residues.

Belongs to the ATP-dependent DNA ligase family. In terms of assembly, interacts with PCNA. Interacts with POLB. Requires Mg(2+) as cofactor.

The protein localises to the nucleus. It carries out the reaction ATP + (deoxyribonucleotide)n-3'-hydroxyl + 5'-phospho-(deoxyribonucleotide)m = (deoxyribonucleotide)n+m + AMP + diphosphate.. Its function is as follows. DNA ligase that seals nicks in double-stranded during DNA repair. Also involved in DNA replication and DNA recombination. The polypeptide is DNA ligase 1 (Lig1) (Mus musculus (Mouse)).